We begin with the raw amino-acid sequence, 461 residues long: Bifunctional protein GlmU (461 aa).

The pyrophosphorylase stretch occupies residues 1 to 229 (MNKYVVILAA…FSESLGVNDR (229 aa)). Residues 8–11 (LAAG), Lys22, Gln72, and 77–78 (GT) contribute to the UDP-N-acetyl-alpha-D-glucosamine site. A Mg(2+)-binding site is contributed by Asp102. UDP-N-acetyl-alpha-D-glucosamine contacts are provided by Gly139, Glu154, Asn169, and Asn227. Asn227 lines the Mg(2+) pocket. The tract at residues 230-250 (IALAQATKIMQRRINEEHMRN) is linker. Positions 251-461 (GVSFIDPDTA…LPLAKDKEWE (211 aa)) are N-acetyltransferase. Arg332 and Lys350 together coordinate UDP-N-acetyl-alpha-D-glucosamine. His362 (proton acceptor) is an active-site residue. Tyr365 and Asn376 together coordinate UDP-N-acetyl-alpha-D-glucosamine. Acetyl-CoA-binding positions include 385–386 (NY), Ala422, and Arg439.

In the N-terminal section; belongs to the N-acetylglucosamine-1-phosphate uridyltransferase family. This sequence in the C-terminal section; belongs to the transferase hexapeptide repeat family. As to quaternary structure, homotrimer. Requires Mg(2+) as cofactor.

It is found in the cytoplasm. The catalysed reaction is alpha-D-glucosamine 1-phosphate + acetyl-CoA = N-acetyl-alpha-D-glucosamine 1-phosphate + CoA + H(+). It carries out the reaction N-acetyl-alpha-D-glucosamine 1-phosphate + UTP + H(+) = UDP-N-acetyl-alpha-D-glucosamine + diphosphate. The protein operates within nucleotide-sugar biosynthesis; UDP-N-acetyl-alpha-D-glucosamine biosynthesis; N-acetyl-alpha-D-glucosamine 1-phosphate from alpha-D-glucosamine 6-phosphate (route II): step 2/2. Its pathway is nucleotide-sugar biosynthesis; UDP-N-acetyl-alpha-D-glucosamine biosynthesis; UDP-N-acetyl-alpha-D-glucosamine from N-acetyl-alpha-D-glucosamine 1-phosphate: step 1/1. It functions in the pathway bacterial outer membrane biogenesis; LPS lipid A biosynthesis. Its function is as follows. Catalyzes the last two sequential reactions in the de novo biosynthetic pathway for UDP-N-acetylglucosamine (UDP-GlcNAc). The C-terminal domain catalyzes the transfer of acetyl group from acetyl coenzyme A to glucosamine-1-phosphate (GlcN-1-P) to produce N-acetylglucosamine-1-phosphate (GlcNAc-1-P), which is converted into UDP-GlcNAc by the transfer of uridine 5-monophosphate (from uridine 5-triphosphate), a reaction catalyzed by the N-terminal domain. The polypeptide is Bifunctional protein GlmU (Lactobacillus johnsonii (strain CNCM I-12250 / La1 / NCC 533)).